A 172-amino-acid chain; its full sequence is Putative phosphoesterase BcerKBAB4_1135 (172 aa).

Residue His34 is the Proton donor of the active site. 2 short sequence motifs (HXTX) span residues 34 to 37 (HITL) and 115 to 118 (HLTI). His115 acts as the Proton acceptor in catalysis.

This sequence belongs to the 2H phosphoesterase superfamily. YjcG family.

This Bacillus mycoides (strain KBAB4) (Bacillus weihenstephanensis) protein is Putative phosphoesterase BcerKBAB4_1135.